A 457-amino-acid polypeptide reads, in one-letter code: Argininosuccinate lyase (457 aa).

The protein belongs to the lyase 1 family. Argininosuccinate lyase subfamily.

The protein resides in the cytoplasm. It carries out the reaction 2-(N(omega)-L-arginino)succinate = fumarate + L-arginine. Its pathway is amino-acid biosynthesis; L-arginine biosynthesis; L-arginine from L-ornithine and carbamoyl phosphate: step 3/3. The polypeptide is Argininosuccinate lyase (Escherichia coli O1:K1 / APEC).